Reading from the N-terminus, the 80-residue chain is MKLTCVLIIAVLFLTACQLATAKTYSTGRQKHRALRSTDKNIKLSRRCNDPGGSCTRHYHCCQLYCNKQESVCLENEPAF.

The first 22 residues, 1-22 (MKLTCVLIIAVLFLTACQLATA), serve as a signal peptide directing secretion. The propeptide occupies 23–45 (KTYSTGRQKHRALRSTDKNIKLS). Disulfide bonds link cysteine 48–cysteine 62, cysteine 55–cysteine 66, and cysteine 61–cysteine 73.

The protein belongs to the conotoxin O1 superfamily. Expressed by the venom duct.

It is found in the secreted. In terms of biological role, when injected intracranially in mice, induces a series of symptoms such as quivering, climbing, scratching, barrel rolling and paralysis of limbs. Unexpectedly, no effect is observed on ionic currents when tested on locust DUM neuron. The polypeptide is Conotoxin Bt6.5 (Conus betulinus (Beech cone)).